We begin with the raw amino-acid sequence, 422 residues long: Dihydrolipoyllysine-residue succinyltransferase component of 2-oxoglutarate dehydrogenase complex (422 aa).

Residues 1–76 form the Lipoyl-binding domain; that stretch reads MPEVKVPELA…EVGQAIAIIG (76 aa). Lysine 42 is subject to N6-lipoyllysine. Residues 77-185 are disordered; sequence EGSGNASKEN…SAKEEKKYNQ (109 aa). Polar residues-rich tracts occupy residues 80–94 and 116–130; these read GNASKENSNDNTPQQ and NQANDDNQQRINATP. The 37-residue stretch at 127 to 163 folds into the Peripheral subunit-binding (PSBD) domain; sequence NATPSARRYARENGVNLAEVSPKTNDVVRKEDIDKKQ. Positions 152–163 are enriched in basic and acidic residues; that stretch reads DVVRKEDIDKKQ. A compositionally biased stretch (low complexity) spans 164–176; it reads QAPASTQTTQQAS. Active-site residues include histidine 393 and aspartate 397.

Belongs to the 2-oxoacid dehydrogenase family. Forms a 24-polypeptide structural core with octahedral symmetry. Part of the 2-oxoglutarate dehydrogenase (OGDH) complex composed of E1 (2-oxoglutarate dehydrogenase), E2 (dihydrolipoamide succinyltransferase) and E3 (dihydrolipoamide dehydrogenase); the complex contains multiple copies of the three enzymatic components (E1, E2 and E3). It depends on (R)-lipoate as a cofactor.

It catalyses the reaction N(6)-[(R)-dihydrolipoyl]-L-lysyl-[protein] + succinyl-CoA = N(6)-[(R)-S(8)-succinyldihydrolipoyl]-L-lysyl-[protein] + CoA. The protein operates within amino-acid degradation; L-lysine degradation via saccharopine pathway; glutaryl-CoA from L-lysine: step 6/6. Its function is as follows. E2 component of the 2-oxoglutarate dehydrogenase (OGDH) complex which catalyzes the second step in the conversion of 2-oxoglutarate to succinyl-CoA and CO(2). The protein is Dihydrolipoyllysine-residue succinyltransferase component of 2-oxoglutarate dehydrogenase complex (odhB) of Staphylococcus aureus (strain USA300).